A 536-amino-acid polypeptide reads, in one-letter code: Austinoid biosynthesis cluster protein W (536 aa).

Residues 1-19 (MKHPTVALLGVGMLGCAAA) form the signal peptide. 5 disordered regions span residues 141–164 (GSAP…PGFP), 185–220 (SLPG…PGFS), 261–302 (FGVP…ASNG), 385–423 (PGSA…ASNG), and 491–536 (PSPT…SSAE). A compositionally biased stretch (low complexity) spans 195–208 (SGPSQAAAAPSTGD). Residues 209 to 220 (SGSGLPGSPGFS) show a composition bias toward gly residues. Low complexity-rich tracts occupy residues 287–302 (AGNA…ASNG) and 408–423 (AGNA…ASNG).

Its pathway is secondary metabolite biosynthesis; terpenoid biosynthesis. Part of the gene cluster that mediates the biosynthesis of calidodehydroaustin, a fungal meroterpenoid. The first step of the pathway is the synthesis of 3,5-dimethylorsellinic acid by the polyketide synthase ausA. 3,5-dimethylorsellinic acid is then prenylated by the polyprenyl transferase ausN. Further epoxidation by the FAD-dependent monooxygenase ausM and cyclization by the probable terpene cyclase ausL lead to the formation of protoaustinoid A. Protoaustinoid A is then oxidized to spiro-lactone preaustinoid A3 by the combined action of the FAD-binding monooxygenases ausB and ausC, and the dioxygenase ausE. Acid-catalyzed keto-rearrangement and ring contraction of the tetraketide portion of preaustinoid A3 by ausJ lead to the formation of preaustinoid A4. The aldo-keto reductase ausK, with the help of ausH, is involved in the next step by transforming preaustinoid A4 into isoaustinone which is in turn hydroxylated by the P450 monooxygenase ausI to form austinolide. The cytochrome P450 monooxygenase ausG modifies austinolide to austinol. Austinol is further acetylated to austin by the O-acetyltransferase ausP, which spontaneously changes to dehydroaustin. The cytochrome P450 monooxygenase ausR then converts dehydroaustin is into 7-dehydrodehydroaustin. The hydroxylation catalyzed by ausR permits the O-acetyltransferase ausQ to add an additional acetyl group to the molecule, leading to the formation of acetoxydehydroaustin. The short chain dehydrogenase ausT catalyzes the reduction of the double bond present between carbon atoms 1 and 2 to convert 7-dehydrodehydroaustin into 1,2-dihydro-7-hydroxydehydroaustin. AusQ catalyzes not only an acetylation reaction but also the addition of the PKS ausV diketide product to 1,2-dihydro-7-hydroxydehydroaustin, forming precalidodehydroaustin. Finally, the iron/alpha-ketoglutarate-dependent dioxygenase converts precalidodehydroaustin into calidodehydroaustin. This is Austinoid biosynthesis cluster protein W from Aspergillus calidoustus.